The sequence spans 264 residues: Putative [LysW]-aminoadipate/[LysW]-glutamate kinase (264 aa).

Substrate contacts are provided by residues 34 to 35 (GG), Arg61, and Asn169.

Belongs to the acetylglutamate kinase family. LysZ subfamily.

The protein resides in the cytoplasm. It carries out the reaction [amino-group carrier protein]-C-terminal-N-(1,4-dicarboxybutan-1-yl)-L-glutamine + ATP = [amino-group carrier protein]-C-terminal-N-(1-carboxy-5-phosphooxy-5-oxopentan-1-yl)-L-glutamine + ADP. It catalyses the reaction [amino-group carrier protein]-C-terminal-gamma-(L-glutamyl)-L-glutamate + ATP = [amino-group carrier protein]-C-terminal-gamma-(5-phospho-L-glutamyl)-L-glutamate + ADP. It functions in the pathway amino-acid biosynthesis; L-lysine biosynthesis via AAA pathway; L-lysine from L-alpha-aminoadipate (Thermus route): step 2/5. It participates in amino-acid biosynthesis; L-arginine biosynthesis. Its function is as follows. Involved in both the arginine and lysine biosynthetic pathways. Phosphorylates the LysW-bound precursors glutamate (for arginine biosynthesis), respectively alpha-aminoadipate (for lysine biosynthesis). In Ignicoccus hospitalis (strain KIN4/I / DSM 18386 / JCM 14125), this protein is Putative [LysW]-aminoadipate/[LysW]-glutamate kinase.